We begin with the raw amino-acid sequence, 212 residues long: Uridine kinase (212 aa).

An ATP-binding site is contributed by 13–20 (GASASGKS).

The protein belongs to the uridine kinase family.

The protein localises to the cytoplasm. The catalysed reaction is uridine + ATP = UMP + ADP + H(+). It carries out the reaction cytidine + ATP = CMP + ADP + H(+). It functions in the pathway pyrimidine metabolism; CTP biosynthesis via salvage pathway; CTP from cytidine: step 1/3. The protein operates within pyrimidine metabolism; UMP biosynthesis via salvage pathway; UMP from uridine: step 1/1. This chain is Uridine kinase, found in Shewanella frigidimarina (strain NCIMB 400).